The following is a 176-amino-acid chain: MIKKISIILITLFIIQLTKSVSVNKNNNNNNNNNNNNNNNNNNNNNNNYFIDHYNYDLDIDLTSQQQQQSSSSSSDAPLEPPSCGELCVCLYTELNYQGLSYEYSIYSGKVDLPPSIRNNITSFVSNADVCFITYDPYVTIQIYTGEFLSNFGIVFGDILQTLAPGLCKDLPPNQF.

Residues 1–20 (MIKKISIILITLFIIQLTKS) form the signal peptide. The tract at residues 26–46 (NNNNNNNNNNNNNNNNNNNNN) is disordered. N-linked (GlcNAc...) asparagine glycosylation occurs at Asn120.

It belongs to the Dictyostelium gerABC family.

It localises to the secreted. This is an uncharacterized protein from Dictyostelium discoideum (Social amoeba).